Here is a 414-residue protein sequence, read N- to C-terminus: Serine-type anaerobic sulfatase-maturating enzyme (414 aa).

The Radical SAM core domain occupies 5 to 250 (TYAPFAKPLY…LCTIFDEWVK (246 aa)). Positions 24 and 28 each coordinate [4Fe-4S] cluster. Tyr-30 is a binding site for S-adenosyl-L-methionine. Cys-31 lines the [4Fe-4S] cluster pocket. S-adenosyl-L-methionine contacts are provided by Gly-76, Ser-131, and Arg-143. The [4Fe-4S] cluster site is built by Cys-276, Cys-282, and Cys-297. The Proton acceptor role is filled by Asp-298. 5 residues coordinate [4Fe-4S] cluster: Cys-339, Cys-342, Cys-348, Cys-352, and Cys-371.

The protein belongs to the radical SAM superfamily. Anaerobic sulfatase-maturating enzyme family. [4Fe-4S] cluster serves as cofactor.

The catalysed reaction is L-seryl-[sulfatase] + S-adenosyl-L-methionine = 3-oxo-L-alanyl-[sulfatase] + 5'-deoxyadenosine + L-methionine + H(+). Its pathway is protein modification; sulfatase oxidation. Involved in 'Ser-type' sulfatase maturation under anaerobic conditions. Links the heparin and the chondroitin sulfate utilization pathways which contribute to the colonization of the intestinal tract. May catalyze the activation of chondro-6-sulfatase, i.e. the post-translational modification of a specific serine residue into 3-oxoalanine (also known as C(alpha)-formylglycine (FGly)), by a free radical chemical mechanism initiated via the reductive cleavage of S-adenosyl-L-methionine (SAM). Is also able to oxidize a cysteine residue in a synthetic substrate to FGly in vitro, but not in a recombinant Cys-type sulfatase in vivo. But since B.thetaiotaomicron possesses only Ser-type sulfatases, the oxidation of serine residues to FGly is the sole physiological activity. The polypeptide is Serine-type anaerobic sulfatase-maturating enzyme (chuR) (Bacteroides thetaiotaomicron (strain ATCC 29148 / DSM 2079 / JCM 5827 / CCUG 10774 / NCTC 10582 / VPI-5482 / E50)).